A 276-amino-acid polypeptide reads, in one-letter code: 2,3,4,5-tetrahydropyridine-2,6-dicarboxylate N-succinyltransferase (276 aa).

Substrate-binding residues include R104 and D141.

The protein belongs to the transferase hexapeptide repeat family. Homotrimer.

It localises to the cytoplasm. It carries out the reaction (S)-2,3,4,5-tetrahydrodipicolinate + succinyl-CoA + H2O = (S)-2-succinylamino-6-oxoheptanedioate + CoA. Its pathway is amino-acid biosynthesis; L-lysine biosynthesis via DAP pathway; LL-2,6-diaminopimelate from (S)-tetrahydrodipicolinate (succinylase route): step 1/3. The polypeptide is 2,3,4,5-tetrahydropyridine-2,6-dicarboxylate N-succinyltransferase (Legionella pneumophila (strain Corby)).